The following is a 162-amino-acid chain: MARVEL domain-containing protein 1 (162 aa).

Residues 1 to 17 lie on the Cytoplasmic side of the membrane; it reads MPTQPQEKRSFLQFLKS. The MARVEL domain maps to 14 to 155; sequence FLKSFVGIVR…SGIYCSCRKC (142 aa). Residues 18 to 38 form a helical membrane-spanning segment; the sequence is FVGIVRVLQILLGAGLWVTIA. The Extracellular segment spans residues 39-47; it reads ANKYEGSIH. The chain crosses the membrane as a helical span at residues 48–68; the sequence is FVLFVAVLFWLLTLAIFILTL. Residues 69 to 86 are Cytoplasmic-facing; that stretch reads LDKQDLVPIVGGERWLLS. A helical transmembrane segment spans residues 87 to 107; sequence NLIHDVVATLLYLSTIGIMIY. Over 108–127 the chain is Extracellular; sequence KTQKNSYCNLDVYKHHCLYK. The chain crosses the membrane as a helical span at residues 128–148; it reads VYLTASVFACLTAAVYLLSGI. At 149-162 the chain is on the cytoplasmic side; that stretch reads YCSCRKCRGERTVV.

The protein localises to the membrane. The protein resides in the nucleus. This is MARVEL domain-containing protein 1 (marveld1) from Danio rerio (Zebrafish).